The primary structure comprises 379 residues: Homoserine O-succinyltransferase (379 aa).

The region spanning 48-357 is the AB hydrolase-1 domain; it reads NAVLICHALS…SAHGHDAFLM (310 aa). S154 acts as the Nucleophile in catalysis. R224 contributes to the substrate binding site. Active-site residues include D319 and H352. D353 contributes to the substrate binding site.

This sequence belongs to the AB hydrolase superfamily. MetX family. Homodimer.

It is found in the cytoplasm. It catalyses the reaction L-homoserine + succinyl-CoA = O-succinyl-L-homoserine + CoA. It functions in the pathway amino-acid biosynthesis; L-methionine biosynthesis via de novo pathway; O-succinyl-L-homoserine from L-homoserine: step 1/1. In terms of biological role, transfers a succinyl group from succinyl-CoA to L-homoserine, forming succinyl-L-homoserine. The chain is Homoserine O-succinyltransferase from Neisseria meningitidis serogroup B (strain ATCC BAA-335 / MC58).